A 415-amino-acid chain; its full sequence is Multidrug resistance protein MdtA (415 aa).

The N-terminal stretch at 1 to 21 is a signal peptide; the sequence is MKGSYKSRWVIVIVVVIAAIA. Positions 31 to 47 are enriched in polar residues; it reads DSQSAAPGATKQAQQSP. 2 disordered regions span residues 31–60 and 392–415; these read DSQS…GPLA and EAQS…GARS. The segment covering 399–415 has biased composition (basic and acidic residues); that stretch reads PEEKATSREYAKKGARS.

This sequence belongs to the membrane fusion protein (MFP) (TC 8.A.1) family. In terms of assembly, part of a tripartite efflux system composed of MdtA, MdtB and MdtC.

It localises to the cell inner membrane. In terms of biological role, the MdtABC tripartite complex confers resistance against novobiocin and deoxycholate. This Escherichia coli O157:H7 protein is Multidrug resistance protein MdtA.